The following is a 391-amino-acid chain: Elongation factor Tu (391 aa).

Residues 10-201 (KPHVNIGTIG…EVDNYIPTPE (192 aa)) enclose the tr-type G domain. Positions 19-26 (GHVDHGKT) are G1. Residue 19 to 26 (GHVDHGKT) coordinates GTP. Thr26 is a binding site for Mg(2+). The segment at 55–59 (GITIS) is G2. Residues 76 to 79 (DCPG) form a G3 region. Residues 76 to 80 (DCPGH) and 131 to 134 (NKVD) contribute to the GTP site. The interval 131-134 (NKVD) is G4. The tract at residues 169–171 (SAL) is G5.

The protein belongs to the TRAFAC class translation factor GTPase superfamily. Classic translation factor GTPase family. EF-Tu/EF-1A subfamily. As to quaternary structure, monomer.

It localises to the cytoplasm. It carries out the reaction GTP + H2O = GDP + phosphate + H(+). Functionally, GTP hydrolase that promotes the GTP-dependent binding of aminoacyl-tRNA to the A-site of ribosomes during protein biosynthesis. The chain is Elongation factor Tu from Bartonella henselae (strain ATCC 49882 / DSM 28221 / CCUG 30454 / Houston 1) (Rochalimaea henselae).